Reading from the N-terminus, the 118-residue chain is uncharacterized protein (118 aa).

It belongs to the transposase IS3/IS150/IS904 family.

This is an uncharacterized protein from Haemophilus influenzae (strain ATCC 51907 / DSM 11121 / KW20 / Rd).